A 379-amino-acid polypeptide reads, in one-letter code: Anhydro-N-acetylmuramic acid kinase (379 aa).

9–16 (GTSVDGID) serves as a coordination point for ATP.

This sequence belongs to the anhydro-N-acetylmuramic acid kinase family.

It catalyses the reaction 1,6-anhydro-N-acetyl-beta-muramate + ATP + H2O = N-acetyl-D-muramate 6-phosphate + ADP + H(+). The protein operates within amino-sugar metabolism; 1,6-anhydro-N-acetylmuramate degradation. It functions in the pathway cell wall biogenesis; peptidoglycan recycling. Its function is as follows. Catalyzes the specific phosphorylation of 1,6-anhydro-N-acetylmuramic acid (anhMurNAc) with the simultaneous cleavage of the 1,6-anhydro ring, generating MurNAc-6-P. Is required for the utilization of anhMurNAc either imported from the medium or derived from its own cell wall murein, and thus plays a role in cell wall recycling. The protein is Anhydro-N-acetylmuramic acid kinase of Acaryochloris marina (strain MBIC 11017).